A 132-amino-acid chain; its full sequence is Large ribosomal subunit protein uL14 (132 aa).

Belongs to the universal ribosomal protein uL14 family. Part of the 50S ribosomal subunit. Forms a cluster with proteins L3 and L24e, part of which may contact the 16S rRNA in 2 intersubunit bridges.

In terms of biological role, binds to 23S rRNA. Forms part of two intersubunit bridges in the 70S ribosome. The protein is Large ribosomal subunit protein uL14 of Picrophilus torridus (strain ATCC 700027 / DSM 9790 / JCM 10055 / NBRC 100828 / KAW 2/3).